The chain runs to 925 residues: Antiviral innate immune response receptor RIG-I (925 aa).

2 CARD domains span residues 1–87 (MTTE…GLYE) and 92–172 (WDFK…KTLK). Serine 8 carries the (Microbial infection) Phosphoserine modification. Phosphoserine is present on serine 8. Residues lysine 48, lysine 96, lysine 154, and lysine 164 each participate in a glycyl lysine isopeptide (Lys-Gly) (interchain with G-Cter in ubiquitin) cross-link. Phosphothreonine is present on threonine 170. Glycyl lysine isopeptide (Lys-Gly) (interchain with G-Cter in ubiquitin) cross-links involve residues lysine 172, lysine 181, lysine 193, and lysine 203. The tract at residues 218–925 (ECQNLSENSC…IPFDPAEMSK (708 aa)) is interaction with ZC3HAV1. The Helicase ATP-binding domain maps to 251–430 (ALPAMKGKNT…DEALDYICKL (180 aa)). 264 to 271 (APTGCGKT) lines the ATP pocket. A DECH box motif is present at residues 372-375 (DECH). A (Microbial infection) Deamidated asparagine; by herpes simplex virus 1/HHV-1 UL37 mark is found at asparagine 495 and asparagine 549. The region spanning 610-776 (KLEDLCFILQ…RLQTWDEAVF (167 aa)) is the Helicase C-terminal domain. A mediates interaction with RNF135 region spans residues 735–925 (GSKCFLLTSN…IPFDPAEMSK (191 aa)). At threonine 770 the chain carries Phosphothreonine; by CK2. Residues 794–925 (QEKPKPVPDK…IPFDPAEMSK (132 aa)) form the RLR CTR domain. Residue cysteine 810 coordinates Zn(2+). Residue lysine 812 forms a Glycyl lysine isopeptide (Lys-Gly) (interchain with G-Cter in ubiquitin) linkage. Cysteine 813 contacts Zn(2+). 2 positions are modified to phosphoserine; by CK2: serine 854 and serine 855. Position 858 is an N6-acetyllysine (lysine 858). Cysteine 864 and cysteine 869 together coordinate Zn(2+). The residue at position 909 (lysine 909) is an N6-acetyllysine.

This sequence belongs to the helicase family. RLR subfamily. As to quaternary structure, monomer; maintained as a monomer in an autoinhibited state. Upon binding of viral RNAs and conformational shift, homooligomerizes and forms filaments on these molecules. Interacts (via tandem CARD domain) with MAVS/IPS1 promoting its filamentation. Interacts with DHX58/LGP2, IKBKE, TBK1 and STING1. Interacts (via CARD domain) with TRIM25 (via SPRY domain). Interacts (double-stranded RNA-bound oligomeric form) with RNF135 (homodimer); involved in RNA length-dependent activation of the RIG-I signaling pathway. Interacts with CYLD. Interacts with NLRC5; blocks the interaction of MAVS/IPS1 to RIGI. Interacts with SRC. Interacts with DDX60. Interacts with isoform 2 of ZC3HAV1 (via zinc-fingers) in an RNA-dependent manner. Interacts (via tandem CARD domain) with SEC14L1; the interaction is direct and impairs the interaction of RIGI with MAVS/IPS1. Interacts with VCP/p97; interaction is direct and allows the recruitment of RNF125 and subsequent ubiquitination and degradation. Interacts with NOP53; may regulate RIGI through USP15-mediated 'Lys-63'-linked deubiquitination. Interacts with SIGLEC10, CBL and PTPN11; within a negative feedback loop leading to RIGI degradation. Interacts with LRRC25. Interacts with ZCCHC3; leading to activation of RIGI. Interacts with RNF123. Interacts with UBE2D3 and UBE2N; E2 ubiquitin ligases involved in RNF135-mediated ubiquitination of RIGI and activation of the RIG-I signaling pathway. Interacts with IFIT3. Interacts with DDX3X. Interacts with RTN3. Interacts with ARL16; this interaction is GTP-dependent and induced upon viral infection; this interaction suppresses the RNA sensing activity of RIGI. Interacts with DHX16; this interaction enhances RIGI-mediated antiviral response. Interacts with IRGM; promoting RIGI degradation. Interacts with IFI6; this interaction inhibits RIGI activation. Interacts with ECSIT; this interaction bridges RIGI to the MAVS complex at the mitochondrion. Interacts with YWHAE; this interaction drives RIGI at the mitochondrion. (Microbial infection) Interacts with protein Z of Guanarito virus, Machupo virus, Junin arenavirus and Sabia virus. This interaction disrupts its interaction with MAVS/IPS1, impeding downstream IRF3 and NF-kappa-B activation and resulting in decreased IFN-beta induction. In terms of assembly, (Microbial infection) Interacts (via CARD domain) with Human respiratory syncytial virus A non-structural protein 2 (NS2) and this interaction disrupts its interaction with MAVS/IPS1, impeding downstream IRF3 activation. As to quaternary structure, (Microbial infection) Interacts with Rotavirus A non-structural protein 1 (NSP1) and this interaction induces down-regulation of RIGI. (Microbial infection) Interacts with paramyxoviruses (Sendai virus, Nipah virus, Measles virus and Parainfluenza virus 5) protein V; this interaction inhibits TRIM25-mediated ubiquitination of RIG-I and prevents downstream RIG-I signaling thereby inhibiting the IFN responses. In terms of assembly, (Microbial infection) Interacts with herpes simplex virus 1 protein US11; this interaction prevents the interaction of MAVS/IPS1 to RIGI. As to quaternary structure, (Microbial infection) Interacts with herpes simplex virus 1 protein UL37; this interaction deaminates RIGI and inhibits its activation. (Microbial infection) Interacts with Severe fever with thrombocytopenia virus (SFTSV) NSs; this interaction this interaction sequesters RIGI in NSs-induced cytoplasmic inclusion bodies thereby inhibiting the IFN responses. Post-translationally, phosphorylated in resting cells and dephosphorylated in RNA virus-infected cells. Phosphorylation at Thr-770, Ser-854 and Ser-855 results in inhibition of its activity while dephosphorylation at these sites results in its activation. Ubiquitinated. 'Lys-63' ubiquitination by RNF135, which occurs after RNA-binding and homodimerization, releases the autoinhibition of the CARD domains by the RLR CTR domain, an essential step in the activation of the RIG-I signaling pathway. Lys-172 is the critical site of ubiquitination for MAVS/IPS1 binding and to induce anti-viral signal transduction. Lys-154, Lys-164 and Lys-172 are shared sites for RNF135-mediated and TRIM4-mediated ubiquitination. Also undergoes 'Lys-48' ubiquitination at Lys-181 by RNF125 that leads to proteasomal degradation. 'Lys-48' ubiquitination follows viral infection and is enhanced by 'Lys-63'-linked ubiquitination of the CARD domains that promotes interaction with VCP/p97 and subsequent recruitment of RNF125. Within a negative feedback loop involving SIGLEC10 and PTPN11, 'Lys-48' ubiquitination at Lys-812 by CBL also elicits the proteasomal degradation of RIGI. Deubiquitinated by CYLD, a protease that selectively cleaves 'Lys-63'-linked ubiquitin chains. Also probably deubiquitinated by USP17L2/USP17 that cleaves 'Lys-48'- and 'Lys-63'-linked ubiquitin chains and positively regulates the receptor. Ubiquitinated by TRIM40 via 'Lys-48'-linked ubiquitination; leading to proteasomal degradation. Deubiquitinated by USP27X that cleaves 'Lys-63'-linked ubiquitin chains and inhibits the innate immune receptor activity. Deubiquitinated by USP3 that also cleaves 'Lys-63'-linked ubiquitin chains and inhibits the innate immune receptor activity. Undergoes 'Lys-48'-linked ubiquitination catalyzed by MARCHF5 at Lys-193 and Lys-203, leading to proteasomal degradation. In terms of processing, phosphorylated at Ser-8 and Thr-170; these phosphorylations suppresse the TRIM25-mediated 'Lys-63'-linked ubiquitination of RIG-I and thereby prevents RIG-I downstream signaling. Dephosphorylated by phosphatases PPP1CA/PPP1CC; this step is essential to activate RIGI and initiate downstream signaling. Post-translationally, ISGylated. Conjugated to ubiquitin-like protein ISG15 upon IFN-beta stimulation. ISGylation negatively regulates its function in antiviral signaling response. Sumoylated, probably by MUL1; inhibiting its polyubiquitination. In terms of processing, acetylated in response to RNA virus infection. Deacetylated by HDAC6 in the presence of viral mRNAs which is required for detection of viral RNA by RIGI. Post-translationally, (Microbial infection) Deamidated on Asn-495 and Asn-549 by herpes simplex virus 1 protein UL37. These modifications eliminate RIGI detection of viral RNA and restriction of viral replication. Degraded via selective autophagy following interaction with IRGM. IRGM promotes RIGI recruitment to autophagosome membranes, promoting its SQSTM1/p62-dependent autophagic degradation. In terms of processing, (Microbial infection) Cleaved by the protease 3C of coxsackievirus B3, poliovirus and enterovirus 71 allowing the virus to disrupt the host type I interferon production. Post-translationally, (Microbial infection) Phosphorylated at Ser-8 by herpes simplex virus 1 protein US3 leading to inhibition of critical RIGI activation steps. In terms of tissue distribution, present in vascular smooth cells (at protein level).

The protein localises to the cytoplasm. Its subcellular location is the cell projection. It localises to the ruffle membrane. The protein resides in the cytoskeleton. It is found in the cell junction. The protein localises to the tight junction. The enzyme catalyses ATP + H2O = ADP + phosphate + H(+). Its function is as follows. Innate immune receptor that senses cytoplasmic viral nucleic acids and activates a downstream signaling cascade leading to the production of type I interferons and pro-inflammatory cytokines. Forms a ribonucleoprotein complex with viral RNAs on which it homooligomerizes to form filaments. The homooligomerization allows the recruitment of RNF135 an E3 ubiquitin-protein ligase that activates and amplifies the RIG-I-mediated antiviral signaling in an RNA length-dependent manner through ubiquitination-dependent and -independent mechanisms. Upon activation, associates with mitochondria antiviral signaling protein (MAVS/IPS1) that activates the IKK-related kinases TBK1 and IKBKE which in turn phosphorylate the interferon regulatory factors IRF3 and IRF7, activating transcription of antiviral immunological genes including the IFN-alpha and IFN-beta interferons. Ligands include 5'-triphosphorylated ssRNAs and dsRNAs but also short dsRNAs (&lt;1 kb in length). In addition to the 5'-triphosphate moiety, blunt-end base pairing at the 5'-end of the RNA is very essential. Overhangs at the non-triphosphorylated end of the dsRNA RNA have no major impact on its activity. A 3'overhang at the 5'triphosphate end decreases and any 5'overhang at the 5' triphosphate end abolishes its activity. Detects both positive and negative strand RNA viruses including members of the families Paramyxoviridae: Human respiratory syncytial virus and measles virus (MeV), Rhabdoviridae: vesicular stomatitis virus (VSV), Orthomyxoviridae: influenza A and B virus, Flaviviridae: Japanese encephalitis virus (JEV), hepatitis C virus (HCV), dengue virus (DENV) and west Nile virus (WNV). It also detects rotaviruses and reoviruses. Detects and binds to SARS-CoV-2 RNAs which is inhibited by m6A RNA modifications. Also involved in antiviral signaling in response to viruses containing a dsDNA genome such as Epstein-Barr virus (EBV). Detects dsRNA produced from non-self dsDNA by RNA polymerase III, such as Epstein-Barr virus-encoded RNAs (EBERs). May play important roles in granulocyte production and differentiation, bacterial phagocytosis and in the regulation of cell migration. In Homo sapiens (Human), this protein is Antiviral innate immune response receptor RIG-I.